The sequence spans 407 residues: Arginine deiminase (407 aa).

Cysteine 397 functions as the Amidino-cysteine intermediate in the catalytic mechanism.

The protein belongs to the arginine deiminase family.

Its subcellular location is the cytoplasm. The enzyme catalyses L-arginine + H2O = L-citrulline + NH4(+). Its pathway is amino-acid degradation; L-arginine degradation via ADI pathway; carbamoyl phosphate from L-arginine: step 1/2. This is Arginine deiminase from Limosilactobacillus fermentum (strain NBRC 3956 / LMG 18251) (Lactobacillus fermentum).